The following is a 98-amino-acid chain: Putative septation protein SpoVG (98 aa).

The protein belongs to the SpoVG family.

Its function is as follows. Essential for sporulation. Interferes with or is a negative regulator of the pathway leading to asymmetric septation. The protein is Putative septation protein SpoVG of Shouchella clausii (strain KSM-K16) (Alkalihalobacillus clausii).